A 367-amino-acid polypeptide reads, in one-letter code: Cytochrome P450 119 (367 aa).

The heme site is built by His76, Arg80, Thr257, Arg259, His315, and Cys317.

It belongs to the cytochrome P450 family. Heme serves as cofactor.

The protein resides in the cytoplasm. This Sulfurisphaera tokodaii (strain DSM 16993 / JCM 10545 / NBRC 100140 / 7) (Sulfolobus tokodaii) protein is Cytochrome P450 119 (cyp119).